Consider the following 430-residue polypeptide: Asparagine--tRNA ligase (430 aa).

Belongs to the class-II aminoacyl-tRNA synthetase family. Homodimer.

It localises to the cytoplasm. The catalysed reaction is tRNA(Asn) + L-asparagine + ATP = L-asparaginyl-tRNA(Asn) + AMP + diphosphate + H(+). The polypeptide is Asparagine--tRNA ligase (Geobacillus thermodenitrificans (strain NG80-2)).